The sequence spans 21 residues: Basic phospholipase A2 BjIV (21 aa).

Belongs to the phospholipase A2 family. Group II subfamily. In terms of assembly, can form dimers, trimers and tetramers. Ca(2+) is required as a cofactor. Contains seven disulfide bonds. In terms of tissue distribution, expressed by the venom gland.

The protein localises to the secreted. It carries out the reaction a 1,2-diacyl-sn-glycero-3-phosphocholine + H2O = a 1-acyl-sn-glycero-3-phosphocholine + a fatty acid + H(+). With respect to regulation, inhibited by crotapotin. Snake venom phospholipase A2 has a high enzymatic activity and produces moderate myonecrosis in skeletal muscle, but shows no neuromuscular activity in mouse phrenic nerve-diaphragm preparations. PLA2 catalyzes the calcium-dependent hydrolysis of the 2-acyl groups in 3-sn-phosphoglycerides. The protein is Basic phospholipase A2 BjIV of Bothrops jararacussu (Jararacussu).